Here is a 497-residue protein sequence, read N- to C-terminus: MDLQRGFVFLSLVLSFMIIETTAYRERQLLLLQPPQETAIDTANAVVTVQDRGLKTRRPEHKNAYATMMYMGTPRDYEFYVATRVLIRSLRSLHVEADLVVIASLDVPLRWVQTLEEEDGAKVVRVENVDNPYRRQTNFNSRFKLTLNKLYAWALSDYDRVVMLDADNLFLKKADELFQCGRFCAVFINPCIFHTGLFVLQPSVEVFKDMLHELQVGRKNPDGADQGFLVSYFSDLLDQPLFSPPSNGSVLNGHLRLPLGYQMDASYFYLKLRWNIPCGPNSVITFPGAVWLKPWYWWSWPVLPLGFSWHEQRRATIGYSAEMPLVIIQAMFYLGIIVVTRLARPNITKLCYRRSDRNLTTIQAGFKLIALLSVVAAYIFPFFTIPHTIHPLIGWSLYLMASFALSSISINTLLLPTLPVLTPWLGILGTLLVMAFPWYPDGVVRALSVFAYAFCCAPFVWVSFRKITSHLQVLIEKEVLFPRLGDSGVTSGFSKLY.

A helical transmembrane segment spans residues L3–A23. D165 and D167 together coordinate Mn(2+). 5 helical membrane passes run Y319–V339, G365–I385, T388–I408, L418–W438, and G442–V462.

It belongs to the glycosyltransferase 8 family. Glycogenin subfamily. It depends on Mn(2+) as a cofactor.

Its subcellular location is the membrane. This Arabidopsis thaliana (Mouse-ear cress) protein is Putative glucuronosyltransferase PGSIP8 (PGSIP8).